A 210-amino-acid chain; its full sequence is Late histone H1 (210 aa).

Disordered stretches follow at residues 1–21 (MSAAKPKTAKKARAAPAHPPT) and 86–210 (SFKL…AAKK). Positions 17–91 (AHPPTSQMVV…GASGSFKLGK (75 aa)) constitute an H15 domain. Residues 104 to 113 (AAAKKAKLAA) are compositionally biased toward basic residues. Basic and acidic residues predominate over residues 114–123 (KKKEQKEKKA). Residues 124 to 210 (AKTKARKEKL…KPAAKKAAKK (87 aa)) show a composition bias toward basic residues.

Belongs to the histone H1/H5 family.

The protein resides in the nucleus. Its subcellular location is the chromosome. In terms of biological role, histones H1 are necessary for the condensation of nucleosome chains into higher-order structures. This is Late histone H1 from Lytechinus pictus (Painted sea urchin).